Reading from the N-terminus, the 342-residue chain is Oxygen-dependent coproporphyrinogen-III oxidase (342 aa).

S98 is a substrate binding site. 2 residues coordinate a divalent metal cation: H102 and H112. Catalysis depends on H112, which acts as the Proton donor. 114–116 (NYR) is a binding site for substrate. A divalent metal cation-binding residues include H146 and H176. Residues 266 to 301 (YVEFNLVWDRGTIFGLQTNGRTESILMSLPPLARWE) form an important for dimerization region.

The protein belongs to the aerobic coproporphyrinogen-III oxidase family. Homodimer. It depends on a divalent metal cation as a cofactor.

The protein localises to the cytoplasm. The enzyme catalyses coproporphyrinogen III + O2 + 2 H(+) = protoporphyrinogen IX + 2 CO2 + 2 H2O. The protein operates within porphyrin-containing compound metabolism; protoporphyrin-IX biosynthesis; protoporphyrinogen-IX from coproporphyrinogen-III (O2 route): step 1/1. In terms of biological role, involved in the heme and chlorophyll biosynthesis. Catalyzes the aerobic oxidative decarboxylation of propionate groups of rings A and B of coproporphyrinogen-III to yield the vinyl groups in protoporphyrinogen-IX. This is Oxygen-dependent coproporphyrinogen-III oxidase from Prochlorococcus marinus (strain MIT 9312).